We begin with the raw amino-acid sequence, 185 residues long: Ribosome-recycling factor (185 aa).

This sequence belongs to the RRF family.

Its subcellular location is the cytoplasm. Its function is as follows. Responsible for the release of ribosomes from messenger RNA at the termination of protein biosynthesis. May increase the efficiency of translation by recycling ribosomes from one round of translation to another. The chain is Ribosome-recycling factor from Pseudarthrobacter chlorophenolicus (strain ATCC 700700 / DSM 12829 / CIP 107037 / JCM 12360 / KCTC 9906 / NCIMB 13794 / A6) (Arthrobacter chlorophenolicus).